A 450-amino-acid chain; its full sequence is Glucose-6-phosphate isomerase (450 aa).

At threonine 38 the chain carries Phosphothreonine. The active-site Proton donor is glutamate 290. Catalysis depends on residues histidine 311 and lysine 425.

This sequence belongs to the GPI family.

Its subcellular location is the cytoplasm. It catalyses the reaction alpha-D-glucose 6-phosphate = beta-D-fructose 6-phosphate. The protein operates within carbohydrate biosynthesis; gluconeogenesis. It participates in carbohydrate degradation; glycolysis; D-glyceraldehyde 3-phosphate and glycerone phosphate from D-glucose: step 2/4. Its function is as follows. Catalyzes the reversible isomerization of glucose-6-phosphate to fructose-6-phosphate. The polypeptide is Glucose-6-phosphate isomerase (Bacillus subtilis (strain 168)).